The chain runs to 323 residues: Sphingolipid delta(4)-desaturase/C4-monooxygenase DES2 (323 aa).

Gly-2 carries the N-myristoyl glycine lipid modification. 2 consecutive transmembrane segments (helical) span residues 41–61 (PHIKWTVSGMVLVQVLACWLV) and 68–88 (WLLFWAYAFGGCINHSLTLAI). The Histidine box-1 signature appears at 89 to 93 (HDISH). The interval 95–99 (TAFGT) is required for C4-hydroxylase activity. A Histidine box-2 motif is present at residues 128-132 (HVDHH). Residues 210–231 (VYLLGSSLLGLGLHPISGHFVA) form a helical membrane-spanning segment. Residues 259–263 (HMEHH) carry the Histidine box-3 motif.

The protein belongs to the fatty acid desaturase type 1 family. DEGS subfamily. In terms of tissue distribution, highly expressed in intestinal crypt cells and adjacent epithelial cells (at protein level).

The protein resides in the endoplasmic reticulum membrane. The catalysed reaction is a dihydroceramide + 2 Fe(II)-[cytochrome b5] + O2 + 2 H(+) = a phytoceramide + 2 Fe(III)-[cytochrome b5] + H2O. It catalyses the reaction an N-acylsphinganine + 2 Fe(II)-[cytochrome b5] + O2 + 2 H(+) = an N-acylsphing-4-enine + 2 Fe(III)-[cytochrome b5] + 2 H2O. The enzyme catalyses an N-acylsphinganine + 2 Fe(II)-[cytochrome b5] + O2 + 2 H(+) = an N-acyl-(4R)-4-hydroxysphinganine + 2 Fe(III)-[cytochrome b5] + H2O. It carries out the reaction N-octanoylsphinganine + 2 Fe(II)-[cytochrome b5] + O2 + 2 H(+) = N-octanoyl-4-hydroxysphinganine + 2 Fe(III)-[cytochrome b5] + H2O. It functions in the pathway membrane lipid metabolism; sphingolipid biosynthesis. In terms of biological role, bifunctional enzyme which acts both as a sphingolipid delta(4)-desaturase and a sphingolipid C4-monooxygenase. This is Sphingolipid delta(4)-desaturase/C4-monooxygenase DES2 from Mus musculus (Mouse).